The following is a 188-amino-acid chain: ATP synthase subunit delta (188 aa).

This sequence belongs to the ATPase delta chain family. As to quaternary structure, F-type ATPases have 2 components, F(1) - the catalytic core - and F(0) - the membrane proton channel. F(1) has five subunits: alpha(3), beta(3), gamma(1), delta(1), epsilon(1). F(0) has three main subunits: a(1), b(2) and c(10-14). The alpha and beta chains form an alternating ring which encloses part of the gamma chain. F(1) is attached to F(0) by a central stalk formed by the gamma and epsilon chains, while a peripheral stalk is formed by the delta and b chains.

The protein localises to the cell inner membrane. In terms of biological role, f(1)F(0) ATP synthase produces ATP from ADP in the presence of a proton or sodium gradient. F-type ATPases consist of two structural domains, F(1) containing the extramembraneous catalytic core and F(0) containing the membrane proton channel, linked together by a central stalk and a peripheral stalk. During catalysis, ATP synthesis in the catalytic domain of F(1) is coupled via a rotary mechanism of the central stalk subunits to proton translocation. Its function is as follows. This protein is part of the stalk that links CF(0) to CF(1). It either transmits conformational changes from CF(0) to CF(1) or is implicated in proton conduction. The sequence is that of ATP synthase subunit delta from Rhizobium rhizogenes (strain K84 / ATCC BAA-868) (Agrobacterium radiobacter).